The following is a 170-amino-acid chain: MQIILLQRIVNLGKLGETVDVKPGYGRNFLIPLGKALPATKANIEKFEARRAELEAEEAKEVAVAQERADALTDVNVIMRAKSGDEGKLFGSIGTRDIAEALTNSGLEVDRAEIKLPEGTLRQIGEYNVDIQLHHDVTATILVTILSEDGDNEDLDEDNAADENEDYSEE.

Positions 149–170 are disordered; that stretch reads DGDNEDLDEDNAADENEDYSEE.

Belongs to the bacterial ribosomal protein bL9 family.

Functionally, binds to the 23S rRNA. This is Large ribosomal subunit protein bL9 from Psychrobacter cryohalolentis (strain ATCC BAA-1226 / DSM 17306 / VKM B-2378 / K5).